A 31-amino-acid chain; its full sequence is Cycloviolacin-O14 (31 aa).

Positions 1-31 form a cross-link, cyclopeptide (Gly-Asn); the sequence is GSIPACGESCFKGKCYTPGCSCSKYPLCAKN. 3 cysteine pairs are disulfide-bonded: Cys-6–Cys-20, Cys-10–Cys-22, and Cys-15–Cys-28.

Post-translationally, this is a cyclic peptide. Expressed in leaves and petioles but not in petals, roots and runners (at protein level).

Its function is as follows. Probably participates in a plant defense mechanism. Has hemolytic activity. The protein is Cycloviolacin-O14 of Viola odorata (Sweet violet).